Here is a 421-residue protein sequence, read N- to C-terminus: 4-hydroxy-3-methylbut-2-en-1-yl diphosphate synthase (flavodoxin) (421 aa).

4 residues coordinate [4Fe-4S] cluster: Cys-311, Cys-314, Cys-357, and Glu-364.

It belongs to the IspG family. [4Fe-4S] cluster serves as cofactor.

The enzyme catalyses (2E)-4-hydroxy-3-methylbut-2-enyl diphosphate + oxidized [flavodoxin] + H2O + 2 H(+) = 2-C-methyl-D-erythritol 2,4-cyclic diphosphate + reduced [flavodoxin]. The protein operates within isoprenoid biosynthesis; isopentenyl diphosphate biosynthesis via DXP pathway; isopentenyl diphosphate from 1-deoxy-D-xylulose 5-phosphate: step 5/6. In terms of biological role, converts 2C-methyl-D-erythritol 2,4-cyclodiphosphate (ME-2,4cPP) into 1-hydroxy-2-methyl-2-(E)-butenyl 4-diphosphate. This Stenotrophomonas maltophilia (strain K279a) protein is 4-hydroxy-3-methylbut-2-en-1-yl diphosphate synthase (flavodoxin).